Consider the following 334-residue polypeptide: Ornithine carbamoyltransferase (334 aa).

Carbamoyl phosphate-binding positions include 56–59 (STRT), glutamine 83, arginine 107, and 134–137 (HPTQ). L-ornithine contacts are provided by residues asparagine 168, aspartate 232, and 236 to 237 (SM). Carbamoyl phosphate is bound by residues 274–275 (CL) and arginine 320.

This sequence belongs to the aspartate/ornithine carbamoyltransferase superfamily. OTCase family.

It localises to the cytoplasm. The enzyme catalyses carbamoyl phosphate + L-ornithine = L-citrulline + phosphate + H(+). Its pathway is amino-acid biosynthesis; L-arginine biosynthesis; L-arginine from L-ornithine and carbamoyl phosphate: step 1/3. In terms of biological role, reversibly catalyzes the transfer of the carbamoyl group from carbamoyl phosphate (CP) to the N(epsilon) atom of ornithine (ORN) to produce L-citrulline. The chain is Ornithine carbamoyltransferase from Shigella boydii serotype 4 (strain Sb227).